Here is a 344-residue protein sequence, read N- to C-terminus: tRNA N6-adenosine threonylcarbamoyltransferase (344 aa).

2 residues coordinate Fe cation: H111 and H115. Residues 133-137 (LVSGG), D166, G179, and N283 each bind substrate. Residue D311 coordinates Fe cation.

It belongs to the KAE1 / TsaD family. Fe(2+) serves as cofactor.

It is found in the cytoplasm. The enzyme catalyses L-threonylcarbamoyladenylate + adenosine(37) in tRNA = N(6)-L-threonylcarbamoyladenosine(37) in tRNA + AMP + H(+). Required for the formation of a threonylcarbamoyl group on adenosine at position 37 (t(6)A37) in tRNAs that read codons beginning with adenine. Is involved in the transfer of the threonylcarbamoyl moiety of threonylcarbamoyl-AMP (TC-AMP) to the N6 group of A37, together with TsaE and TsaB. TsaD likely plays a direct catalytic role in this reaction. The protein is tRNA N6-adenosine threonylcarbamoyltransferase of Orientia tsutsugamushi (strain Ikeda) (Rickettsia tsutsugamushi).